We begin with the raw amino-acid sequence, 320 residues long: MLNKRNPQLNAHGELIHLLSIEGLPKAVLTQILDTAGTFLSVNDREVKKVPLLRGKSVFNLFFENSTRTRTTFEIAAKRLSADVINLDIARSSTAKGESLLDTIANLSAMHADMFVVRHAESGAPYLIAQHVAPHVHVVNAGDGRHAHPTQGLLDMYTIRHYKKDFSNLVVAIVGDIVHSRVARSDIHALTTLGAAEVRAVGPRTLVPADLKHMGVRVCHDMSEGIRDADVIIMLRLQNERMSGALLPSAGEYFKSFGLTEEKLALARPDAIVMHPGPINRGVEIDSSVVDGRQSVILPQVTFGIAVRMAVMSTIAGNNA.

Residues R68 and T69 each contribute to the carbamoyl phosphate site. K96 lines the L-aspartate pocket. Positions 118, 148, and 151 each coordinate carbamoyl phosphate. R181 and R236 together coordinate L-aspartate. 2 residues coordinate carbamoyl phosphate: G277 and P278.

The protein belongs to the aspartate/ornithine carbamoyltransferase superfamily. ATCase family. As to quaternary structure, heterododecamer (2C3:3R2) of six catalytic PyrB chains organized as two trimers (C3), and six regulatory PyrI chains organized as three dimers (R2).

It catalyses the reaction carbamoyl phosphate + L-aspartate = N-carbamoyl-L-aspartate + phosphate + H(+). Its pathway is pyrimidine metabolism; UMP biosynthesis via de novo pathway; (S)-dihydroorotate from bicarbonate: step 2/3. Catalyzes the condensation of carbamoyl phosphate and aspartate to form carbamoyl aspartate and inorganic phosphate, the committed step in the de novo pyrimidine nucleotide biosynthesis pathway. The polypeptide is Aspartate carbamoyltransferase catalytic subunit (Methylibium petroleiphilum (strain ATCC BAA-1232 / LMG 22953 / PM1)).